A 97-amino-acid polypeptide reads, in one-letter code: Co-chaperonin GroES (97 aa).

It belongs to the GroES chaperonin family. In terms of assembly, heptamer of 7 subunits arranged in a ring. Interacts with the chaperonin GroEL.

Its subcellular location is the cytoplasm. Together with the chaperonin GroEL, plays an essential role in assisting protein folding. The GroEL-GroES system forms a nano-cage that allows encapsulation of the non-native substrate proteins and provides a physical environment optimized to promote and accelerate protein folding. GroES binds to the apical surface of the GroEL ring, thereby capping the opening of the GroEL channel. The sequence is that of Co-chaperonin GroES from Gemmatimonas aurantiaca (strain DSM 14586 / JCM 11422 / NBRC 100505 / T-27).